A 185-amino-acid polypeptide reads, in one-letter code: Ribosome-recycling factor (185 aa).

It belongs to the RRF family.

It localises to the cytoplasm. Its function is as follows. Responsible for the release of ribosomes from messenger RNA at the termination of protein biosynthesis. May increase the efficiency of translation by recycling ribosomes from one round of translation to another. In Campylobacter jejuni subsp. doylei (strain ATCC BAA-1458 / RM4099 / 269.97), this protein is Ribosome-recycling factor.